Here is an 88-residue protein sequence, read N- to C-terminus: CLAVATA3/ESR (CLE)-related protein 42 (88 aa).

The first 24 residues, 1-24, serve as a signal peptide directing secretion; it reads MRSPHITISLVFLFFLFLIIQTHQ. Residues 69-88 are disordered; sequence KMIGANEHGVPSGPNPISNR. Hydroxyproline is present on residues Pro79 and Pro82. A glycan (O-linked (Ara...) hydroxyproline) is linked at Pro82.

It belongs to the CLV3/ESR signal peptide family. In terms of processing, the O-glycosylation (arabinosylation) of the hydroxyproline Pro-82 enhances binding affinity of the CLE42p peptide for its receptor. Expressed at low levels in seedlings, roots and inflorescence.

The protein localises to the secreted. The protein resides in the extracellular space. In terms of biological role, extracellular signal peptide that regulates cell fate. Represses tracheary element differentiation but promotes the formation of procambial cells. The protein is CLAVATA3/ESR (CLE)-related protein 42 of Arabidopsis thaliana (Mouse-ear cress).